Reading from the N-terminus, the 294-residue chain is N-acetylmuramic acid 6-phosphate etherase (294 aa).

An SIS domain is found at 54–217 (VISSFQNGGR…STASMIGIGK (164 aa)). Catalysis depends on glutamate 82, which acts as the Proton donor. Glutamate 113 is a catalytic residue.

Belongs to the GCKR-like family. MurNAc-6-P etherase subfamily. In terms of assembly, homodimer.

It carries out the reaction N-acetyl-D-muramate 6-phosphate + H2O = N-acetyl-D-glucosamine 6-phosphate + (R)-lactate. It participates in amino-sugar metabolism; N-acetylmuramate degradation. In terms of biological role, specifically catalyzes the cleavage of the D-lactyl ether substituent of MurNAc 6-phosphate, producing GlcNAc 6-phosphate and D-lactate. This is N-acetylmuramic acid 6-phosphate etherase from Bacillus cytotoxicus (strain DSM 22905 / CIP 110041 / 391-98 / NVH 391-98).